The chain runs to 514 residues: Efflux pump aflT (514 aa).

A run of 10 helical transmembrane segments spans residues 13–33, 61–81, 85–105, 116–136, 146–166, 174–194, 218–238, 247–267, 289–309, and 321–341; these read ISGM…FCVA, SAYL…YALF, WVFL…GVAP, IAGV…AHIV, GLLG…GGAF, WCFY…LFLL, GTIV…WGGV, IIAL…IQVL, VFVF…PIWF, and GIDS…SGAV. An N-linked (GlcNAc...) asparagine glycan is attached at N343. Transmembrane regions (helical) follow at residues 351–371, 378–398, 411–431, and 485–505; these read WFIV…LFTV, WIGF…QGAV, IGTA…TSVA, and LDVF…AVGI.

The protein belongs to the major facilitator superfamily. TCR/Tet family.

It is found in the cell membrane. Efflux pump; part of the gene cluster that mediates the biosynthesis of aflatoxins. The protein is Efflux pump aflT of Aspergillus parasiticus (strain ATCC 56775 / NRRL 5862 / SRRC 143 / SU-1).